A 470-amino-acid chain; its full sequence is Chromosomal replication initiator protein DnaA (470 aa).

Positions 1–89 are domain I, interacts with DnaA modulators; that stretch reads MIESNHVVLW…YNVMVDKTSI (89 aa). The interval 89-130 is domain II; the sequence is IPNQTVNLEASNRSTAVTPKSIVGGNKAPSFLKAPAVQDLDP. The tract at residues 131–348 is domain III, AAA+ region; the sequence is HLNPNYNFEN…GIVIAIMARS (218 aa). Positions 176, 178, 179, and 180 each coordinate ATP. The tract at residues 349-470 is domain IV, binds dsDNA; sequence TIFNKEIDLD…EIESLLKKKA (122 aa).

Belongs to the DnaA family. Oligomerizes as a right-handed, spiral filament on DNA at oriC.

It is found in the cytoplasm. In terms of biological role, plays an essential role in the initiation and regulation of chromosomal replication. ATP-DnaA binds to the origin of replication (oriC) to initiate formation of the DNA replication initiation complex once per cell cycle. Binds the DnaA box (a 9 base pair repeat at the origin) and separates the double-stranded (ds)DNA. Forms a right-handed helical filament on oriC DNA; dsDNA binds to the exterior of the filament while single-stranded (ss)DNA is stabiized in the filament's interior. The ATP-DnaA-oriC complex binds and stabilizes one strand of the AT-rich DNA unwinding element (DUE), permitting loading of DNA polymerase. After initiation quickly degrades to an ADP-DnaA complex that is not apt for DNA replication. Binds acidic phospholipids. This Bacteroides thetaiotaomicron (strain ATCC 29148 / DSM 2079 / JCM 5827 / CCUG 10774 / NCTC 10582 / VPI-5482 / E50) protein is Chromosomal replication initiator protein DnaA.